A 189-amino-acid polypeptide reads, in one-letter code: UPF0301 protein RP032 (189 aa).

The protein belongs to the UPF0301 (AlgH) family.

The protein is UPF0301 protein RP032 of Rickettsia prowazekii (strain Madrid E).